The sequence spans 338 residues: GTPase Obg (338 aa).

Positions 1 to 159 (MQFIDEVKIH…RWLRLELKLL (159 aa)) constitute an Obg domain. Residues 160 to 331 (ADVGLLGFPN…LLDEIARSLW (172 aa)) enclose the OBG-type G domain. GTP is bound by residues 166 to 173 (GFPNVGKS), 191 to 195 (FTTLK), 213 to 216 (DIPG), 283 to 286 (NKMD), and 312 to 314 (SAA). Residues Ser173 and Thr193 each contribute to the Mg(2+) site.

This sequence belongs to the TRAFAC class OBG-HflX-like GTPase superfamily. OBG GTPase family. In terms of assembly, monomer. Requires Mg(2+) as cofactor.

It is found in the cytoplasm. An essential GTPase which binds GTP, GDP and possibly (p)ppGpp with moderate affinity, with high nucleotide exchange rates and a fairly low GTP hydrolysis rate. Plays a role in control of the cell cycle, stress response, ribosome biogenesis and in those bacteria that undergo differentiation, in morphogenesis control. This Geobacter sulfurreducens (strain ATCC 51573 / DSM 12127 / PCA) protein is GTPase Obg.